Reading from the N-terminus, the 601-residue chain is MEGSDLLLAGILFLFAAVVAVPIAARLGIGAVLGYLLAGIAIGPWGLGFISDVDEILHFSELGVVFLMFLIGLELNPSKLWKLRRSIFGIGAAQVLLSAVVLAGLLMLTDFAWQAAVVGGIGLAMSSTAMALQLMRDKGMNRTEGGQLGFSVLLFQDLAVIPALAMVPLLAGNGDEHPDWLKIGMKVLAFAVMLVGGRYLLRPVFRFIAGSGVREVFTAAALLLVLGSALFMDLLGLSMALGTFIAGILLAESEYRHELEIAIEPFKGLLLGLFFISVGMALNLGVLYTHILWVVMSVVVLVSVKMAVLYGLGRFQGLRRTERLPFAGVLSQGGEFAFVLFSSASSQKLFHNDQMALLLVTVTLSMMTTPLVMKGIDRLLARHFNAPDEDAEMPYVEDDKPQVIIVGFGRFGQVIGRLLMANKMRITVLERDISAVNLMRKYGYKVYYGDATELELLRAAGAESAQSIVVTCNDPEDTMRIVHLCQQHFPQMEILARARGRVEAHELLQAGVKQFSRETFSSALELGRKTLISLGMHPHQAQRAQLHFRRLDMRMLRELMPVHTDNAQISRVREARRELEEIFHREMQQERRQLDGWDEFE.

13 helical membrane-spanning segments follow: residues 5–25 (DLLLAGILFLFAAVVAVPIAA), 29–49 (IGAVLGYLLAGIAIGPWGLGF), 55–75 (EILHFSELGVVFLMFLIGLEL), 87–107 (IFGIGAAQVLLSAVVLAGLLM), 115–135 (AAVVGGIGLAMSSTAMALQLM), 152–172 (VLLFQDLAVIPALAMVPLLAG), 181–201 (LKIGMKVLAFAVMLVGGRYLL), 207–227 (FIAGSGVREVFTAAALLLVLG), 230–250 (LFMDLLGLSMALGTFIAGILL), 268–288 (GLLLGLFFISVGMALNLGVLY), 291–311 (ILWVVMSVVVLVSVKMAVLYG), 324–344 (LPFAGVLSQGGEFAFVLFSSA), and 356–376 (ALLLVTVTLSMMTTPLVMKGI). The region spanning 400-519 (KPQVIIVGFG…AGVKQFSRET (120 aa)) is the RCK N-terminal domain.

It belongs to the monovalent cation:proton antiporter 2 (CPA2) transporter (TC 2.A.37) family. KefB subfamily. Interacts with the regulatory subunit KefG.

The protein localises to the cell inner membrane. Functionally, pore-forming subunit of a potassium efflux system that confers protection against electrophiles. Catalyzes K(+)/H(+) antiport. The polypeptide is Glutathione-regulated potassium-efflux system protein KefB (Cronobacter sakazakii (strain ATCC BAA-894) (Enterobacter sakazakii)).